A 1369-amino-acid polypeptide reads, in one-letter code: Phosphoribosylformylglycinamidine synthase (1369 aa).

2 disordered regions span residues 321 to 352 (HPTA…AKPK) and 373 to 400 (ENAR…KPDR). Position 330–341 (330–341 (GASTGAGGEIRD)) interacts with ATP. Residue Ala-721 coordinates ATP. Residues Asp-722, Glu-761, Asn-765, and Asp-934 each contribute to the Mg(2+) site. Residue Ser-936 coordinates ATP. A Glutamine amidotransferase type-1 domain is found at 1116–1369 (MAILREQGVN…MFRNARKQMG (254 aa)). The active-site Nucleophile is Cys-1209. Residues His-1330 and Glu-1332 contribute to the active site.

This sequence in the N-terminal section; belongs to the FGAMS family. Monomer.

It localises to the cytoplasm. The enzyme catalyses N(2)-formyl-N(1)-(5-phospho-beta-D-ribosyl)glycinamide + L-glutamine + ATP + H2O = 2-formamido-N(1)-(5-O-phospho-beta-D-ribosyl)acetamidine + L-glutamate + ADP + phosphate + H(+). The protein operates within purine metabolism; IMP biosynthesis via de novo pathway; 5-amino-1-(5-phospho-D-ribosyl)imidazole from N(2)-formyl-N(1)-(5-phospho-D-ribosyl)glycinamide: step 1/2. Phosphoribosylformylglycinamidine synthase involved in the purines biosynthetic pathway. Catalyzes the ATP-dependent conversion of formylglycinamide ribonucleotide (FGAR) and glutamine to yield formylglycinamidine ribonucleotide (FGAM) and glutamate. The sequence is that of Phosphoribosylformylglycinamidine synthase from Ralstonia nicotianae (strain ATCC BAA-1114 / GMI1000) (Ralstonia solanacearum).